The primary structure comprises 449 residues: Glucose-6-phosphate isomerase (449 aa).

Residue Glu291 is the Proton donor of the active site. Residues His312 and Lys426 contribute to the active site.

It belongs to the GPI family.

It is found in the cytoplasm. It catalyses the reaction alpha-D-glucose 6-phosphate = beta-D-fructose 6-phosphate. Its pathway is carbohydrate biosynthesis; gluconeogenesis. The protein operates within carbohydrate degradation; glycolysis; D-glyceraldehyde 3-phosphate and glycerone phosphate from D-glucose: step 2/4. In terms of biological role, catalyzes the reversible isomerization of glucose-6-phosphate to fructose-6-phosphate. The chain is Glucose-6-phosphate isomerase from Streptococcus pyogenes serotype M6 (strain ATCC BAA-946 / MGAS10394).